We begin with the raw amino-acid sequence, 861 residues long: Leucine--tRNA ligase (861 aa).

A 'HIGH' region motif is present at residues 42–52 (PYPSGKLHMGH). The short motif at 618–622 (KMSKS) is the 'KMSKS' region element. Residue lysine 621 coordinates ATP.

Belongs to the class-I aminoacyl-tRNA synthetase family.

Its subcellular location is the cytoplasm. It catalyses the reaction tRNA(Leu) + L-leucine + ATP = L-leucyl-tRNA(Leu) + AMP + diphosphate. This chain is Leucine--tRNA ligase, found in Buchnera aphidicola subsp. Baizongia pistaciae (strain Bp).